Consider the following 489-residue polypeptide: Arginine biosynthesis bifunctional protein ArgJ 2, mitochondrial (489 aa).

The N-terminal 11 residues, 1–11 (MLLISRIGARH), are a transit peptide targeting the mitochondrion. T205, K234, T245, E341, and N484 together coordinate substrate. Residue T245 is the Nucleophile of the active site.

The protein belongs to the ArgJ family. Heterodimer of an alpha and a beta chain. The alpha and beta chains are autoproteolytically processed from a single precursor protein within the mitochondrion.

Its subcellular location is the mitochondrion matrix. The enzyme catalyses N(2)-acetyl-L-ornithine + L-glutamate = N-acetyl-L-glutamate + L-ornithine. It catalyses the reaction L-glutamate + acetyl-CoA = N-acetyl-L-glutamate + CoA + H(+). It participates in amino-acid biosynthesis; L-arginine biosynthesis; L-ornithine and N-acetyl-L-glutamate from L-glutamate and N(2)-acetyl-L-ornithine (cyclic): step 1/1. It functions in the pathway amino-acid biosynthesis; L-arginine biosynthesis; N(2)-acetyl-L-ornithine from L-glutamate: step 1/4. Its function is as follows. Catalyzes two activities which are involved in the cyclic version of arginine biosynthesis: the synthesis of acetylglutamate from glutamate and acetyl-CoA, and of ornithine by transacetylation between acetylornithine and glutamate. This is Arginine biosynthesis bifunctional protein ArgJ 2, mitochondrial from Sclerotinia sclerotiorum (strain ATCC 18683 / 1980 / Ss-1) (White mold).